The chain runs to 410 residues: Arginine deiminase (410 aa).

The Amidino-cysteine intermediate role is filled by Cys-400.

This sequence belongs to the arginine deiminase family.

It is found in the cytoplasm. The catalysed reaction is L-arginine + H2O = L-citrulline + NH4(+). The protein operates within amino-acid degradation; L-arginine degradation via ADI pathway; carbamoyl phosphate from L-arginine: step 1/2. The sequence is that of Arginine deiminase (arcA) from Borreliella burgdorferi (strain ATCC 35210 / DSM 4680 / CIP 102532 / B31) (Borrelia burgdorferi).